The primary structure comprises 112 residues: 2Fe-2S ferredoxin (112 aa).

The 2Fe-2S ferredoxin-type domain maps to 5–107 (IKVTFIINDG…GIKVHLPAAT (103 aa)). [2Fe-2S] cluster contacts are provided by Cys42, Cys48, Cys51, and Cys88.

Belongs to the adrenodoxin/putidaredoxin family. [2Fe-2S] cluster serves as cofactor.

Its function is as follows. Ferredoxin are iron-sulfur proteins that transfer electrons in a wide variety of metabolic reactions. This is 2Fe-2S ferredoxin (fdxB) from Rickettsia rickettsii.